The following is a 198-amino-acid chain: tRNA (cytidine(56)-2'-O)-methyltransferase (198 aa).

S-adenosyl-L-methionine-binding positions include leucine 81, 110-114 (GAEKV), and 128-135 (IGNQPHSE). The segment at 178 to 198 (DAKQAEASGEGASRKNGQLPS) is disordered.

Belongs to the aTrm56 family. As to quaternary structure, homodimer.

It localises to the cytoplasm. It carries out the reaction cytidine(56) in tRNA + S-adenosyl-L-methionine = 2'-O-methylcytidine(56) in tRNA + S-adenosyl-L-homocysteine + H(+). Its function is as follows. Specifically catalyzes the AdoMet-dependent 2'-O-ribose methylation of cytidine at position 56 in tRNAs. The polypeptide is tRNA (cytidine(56)-2'-O)-methyltransferase (Pyrococcus abyssi (strain GE5 / Orsay)).